A 130-amino-acid chain; its full sequence is Protein ApaG (130 aa).

The ApaG domain occupies 3 to 127 (RAITRNIQVT…FSLDVPDVRR (125 aa)).

The polypeptide is Protein ApaG (Xanthobacter autotrophicus (strain ATCC BAA-1158 / Py2)).